A 233-amino-acid polypeptide reads, in one-letter code: MNTPSQLSLPLYLPDDETFASFFPGENATLLAAIKLAINQPHGSYIYFWSRDSGGRSHLLHAACAELSLKDEAVGYVPLDKRAYFIPEVLDGMEHLSLVCIDNIESIAGDEEWEMAIFNLYNRILEIGRTCLLISGDRPPRQINLKLPDLASRLDWGQIYKLQPLSDDEKLQALQLRAKLRGFELPEDVGRFLLKRLDREMRTLFMALNQLDHASIVAQRKLTIPFVKDILHL.

Belongs to the DnaA family. HdA subfamily. The active form seems to be an ADP-bound monomer. Forms the RIDA complex (regulatory inactivation of DnaA) of ATP-DnaA, ADP-Hda and the DNA-loaded beta sliding clamp (dnaN).

Functionally, mediates the interaction of DNA replication initiator protein DnaA with DNA polymerase subunit beta sliding clamp (dnaN). Stimulates hydrolysis of ATP-DnaA to ADP-DnaA, rendering DnaA inactive for reinitiation, a process called regulatory inhibition of DnaA or RIDA. This is DnaA regulatory inactivator Hda from Photorhabdus laumondii subsp. laumondii (strain DSM 15139 / CIP 105565 / TT01) (Photorhabdus luminescens subsp. laumondii).